The sequence spans 458 residues: Methylenetetrahydrofolate--tRNA-(uracil-5-)-methyltransferase TrmFO (458 aa).

11–16 (GGGMAG) is an FAD binding site.

This sequence belongs to the MnmG family. TrmFO subfamily. It depends on FAD as a cofactor.

Its subcellular location is the cytoplasm. The catalysed reaction is uridine(54) in tRNA + (6R)-5,10-methylene-5,6,7,8-tetrahydrofolate + NADH + H(+) = 5-methyluridine(54) in tRNA + (6S)-5,6,7,8-tetrahydrofolate + NAD(+). It carries out the reaction uridine(54) in tRNA + (6R)-5,10-methylene-5,6,7,8-tetrahydrofolate + NADPH + H(+) = 5-methyluridine(54) in tRNA + (6S)-5,6,7,8-tetrahydrofolate + NADP(+). Its function is as follows. Catalyzes the folate-dependent formation of 5-methyl-uridine at position 54 (M-5-U54) in all tRNAs. This Jannaschia sp. (strain CCS1) protein is Methylenetetrahydrofolate--tRNA-(uracil-5-)-methyltransferase TrmFO.